A 505-amino-acid chain; its full sequence is Bifunctional pantoate ligase/cytidylate kinase (505 aa).

The segment at M1 to T268 is pantoate--beta-alanine ligase. M18–H25 is an ATP binding site. H25 serves as the catalytic Proton donor. Residue Q53 coordinates (R)-pantoate. Q53 is a beta-alanine binding site. G142–D145 contacts ATP. Q148 is a (R)-pantoate binding site. Residues V171 and C179–R182 each bind ATP. Residues F269 to R505 form a cytidylate kinase region.

In the N-terminal section; belongs to the pantothenate synthetase family. This sequence in the C-terminal section; belongs to the cytidylate kinase family. Type 1 subfamily.

The protein localises to the cytoplasm. The catalysed reaction is (R)-pantoate + beta-alanine + ATP = (R)-pantothenate + AMP + diphosphate + H(+). It catalyses the reaction CMP + ATP = CDP + ADP. It carries out the reaction dCMP + ATP = dCDP + ADP. Its pathway is cofactor biosynthesis; (R)-pantothenate biosynthesis; (R)-pantothenate from (R)-pantoate and beta-alanine: step 1/1. Its function is as follows. Catalyzes the condensation of pantoate with beta-alanine in an ATP-dependent reaction via a pantoyl-adenylate intermediate. In terms of biological role, catalyzes the transfer of a phosphate group from ATP to either CMP or dCMP to form CDP or dCDP and ADP, respectively. The protein is Bifunctional pantoate ligase/cytidylate kinase of Prochlorococcus marinus (strain MIT 9313).